The sequence spans 794 residues: Phenylalanine--tRNA ligase beta subunit (794 aa).

The 119-residue stretch at 40–158 (NSLNSELVLG…LKKYLGKDVK (119 aa)) folds into the tRNA-binding domain. The B5 domain maps to 402 to 477 (KNKTEFEIKI…RLYSYDNIQE (76 aa)). D455, D461, E464, and E465 together coordinate Mg(2+). In terms of domain architecture, FDX-ACB spans 702-794 (SKFQSSSRDL…NVKKMKVVIR (93 aa)).

It belongs to the phenylalanyl-tRNA synthetase beta subunit family. Type 1 subfamily. In terms of assembly, tetramer of two alpha and two beta subunits. Mg(2+) serves as cofactor.

It is found in the cytoplasm. It catalyses the reaction tRNA(Phe) + L-phenylalanine + ATP = L-phenylalanyl-tRNA(Phe) + AMP + diphosphate + H(+). The polypeptide is Phenylalanine--tRNA ligase beta subunit (Mycoplasma capricolum subsp. capricolum (strain California kid / ATCC 27343 / NCTC 10154)).